A 1366-amino-acid polypeptide reads, in one-letter code: DNA-directed RNA polymerase subunit beta (1366 aa).

This sequence belongs to the RNA polymerase beta chain family. As to quaternary structure, the RNAP catalytic core consists of 2 alpha, 1 beta, 1 beta' and 1 omega subunit. When a sigma factor is associated with the core the holoenzyme is formed, which can initiate transcription.

The catalysed reaction is RNA(n) + a ribonucleoside 5'-triphosphate = RNA(n+1) + diphosphate. DNA-dependent RNA polymerase catalyzes the transcription of DNA into RNA using the four ribonucleoside triphosphates as substrates. In Polynucleobacter asymbioticus (strain DSM 18221 / CIP 109841 / QLW-P1DMWA-1) (Polynucleobacter necessarius subsp. asymbioticus), this protein is DNA-directed RNA polymerase subunit beta.